A 301-amino-acid polypeptide reads, in one-letter code: UPF0282 protein Pcal_1546 (301 aa).

The protein belongs to the UPF0282 family.

This Pyrobaculum calidifontis (strain DSM 21063 / JCM 11548 / VA1) protein is UPF0282 protein Pcal_1546.